A 1378-amino-acid chain; its full sequence is Attractin-like protein 1 (1378 aa).

An N-terminal signal peptide occupies residues 1-51 (MEPGVRARSGAPQPASPVLWRARPAGGGGASSWLLLDGNSWLLCYGFLYLA). Positions 52-90 (LYAQVSQSKPCERTGSCFSGRCVNSTCLCDPGWVGDQCQ) constitute an EGF-like 1 domain. The Extracellular segment spans residues 52–1229 (LYAQVSQSKP…FSQHNTIMDL (1178 aa)). Disulfide bonds link Cys-62/Cys-78, Cys-80/Cys-89, and Cys-92/Cys-118. Asn-75 carries an N-linked (GlcNAc...) asparagine glycan. The CUB domain maps to 92–208 (CQGRFKLTEP…TGFNIFYSIN (117 aa)). Residues Asn-173 and Asn-197 are each glycosylated (N-linked (GlcNAc...) asparagine). The EGF-like 2 domain occupies 206–244 (SINSCPNNCSGHGKCTTSVSVASQVYCECDKYWKGEACD). 3 disulfide bridges follow: Cys-210–Cys-220, Cys-214–Cys-232, and Cys-234–Cys-243. Kelch repeat units lie at residues 315–364 (FMWV…LYQE), 366–414 (IFMY…EGHS), 426–474 (VMIV…SVYD), 479–530 (SIYV…LING), 532–590 (MLIF…VING), and 591–637 (SMYI…WNKN). The N-linked (GlcNAc...) asparagine glycan is linked to Asn-379. PSI domains lie at 613–656 (NCKA…AKCP), 665–708 (RCYR…TKCH), and 714–759 (ICNK…DACL). Asn-703 carries N-linked (GlcNAc...) asparagine glycosylation. The C-type lectin domain occupies 754 to 872 (VGDACLRINS…TSMADGLVCE (119 aa)). A disulfide bridge links Cys-775 with Cys-871. N-linked (GlcNAc...) asparagine glycosylation is found at Asn-777 and Asn-897. PSI domains lie at 888-938 (PCSL…ATCS) and 941-1011 (NCSG…IQCP). Intrachain disulfides connect Cys-1013-Cys-1021, Cys-1015-Cys-1027, Cys-1030-Cys-1039, Cys-1042-Cys-1056, Cys-1059-Cys-1068, Cys-1061-Cys-1075, Cys-1077-Cys-1087, and Cys-1090-Cys-1105. Laminin EGF-like domains are found at residues 1013–1058 (CQCN…QCTA) and 1059–1107 (CTCG…TCYY). Asn-1156 is a glycosylation site (N-linked (GlcNAc...) asparagine). A helical membrane pass occupies residues 1230 to 1250 (VQFFVTFFSCFLSLLLVAAVV). At 1251 to 1378 (WKIKQTCWAS…HLSTRQGTCV (128 aa)) the chain is on the cytoplasmic side. Residues 1287–1324 (VGAEQTDFLRGPLEGAPKPIAIEPCAGNRAAVLTVFLC) are interaction with MC4R. The interval 1351–1378 (QQKPSDNKDKTSGVRNRKHLSTRQGTCV) is disordered.

In terms of assembly, interacts with MC4R. Highly expressed in brain, heart, lung, kidney and liver. In the central nervous system, it is highly expressed in the dentate gyrus, CA1-3 regions of the hippocampus, and the ventral taenia tecta.

The protein resides in the cell membrane. In terms of biological role, may play a role in melanocortin signaling pathways that regulate energy homeostasis. The protein is Attractin-like protein 1 (Atrnl1) of Mus musculus (Mouse).